We begin with the raw amino-acid sequence, 310 residues long: Protein-L-isoaspartate O-methyltransferase (310 aa).

Disordered regions lie at residues 1–46 (MSGE…DKPA) and 60–79 (ALPGTAAAKPATAPKPTVLK). Basic and acidic residues predominate over residues 14–34 (EDLKRAPRKSEVRSGSGERHA). Over residues 35 to 46 (ASAVPKAADKPA) the composition is skewed to low complexity. Ser-157 is an active-site residue.

It belongs to the methyltransferase superfamily. L-isoaspartyl/D-aspartyl protein methyltransferase family.

The protein localises to the cytoplasm. The catalysed reaction is [protein]-L-isoaspartate + S-adenosyl-L-methionine = [protein]-L-isoaspartate alpha-methyl ester + S-adenosyl-L-homocysteine. Its function is as follows. Catalyzes the methyl esterification of L-isoaspartyl residues in peptides and proteins that result from spontaneous decomposition of normal L-aspartyl and L-asparaginyl residues. It plays a role in the repair and/or degradation of damaged proteins. The chain is Protein-L-isoaspartate O-methyltransferase from Burkholderia ambifaria (strain ATCC BAA-244 / DSM 16087 / CCUG 44356 / LMG 19182 / AMMD) (Burkholderia cepacia (strain AMMD)).